We begin with the raw amino-acid sequence, 604 residues long: Pescadillo homolog (604 aa).

Residues N275–S299 are disordered. The span at I282–S299 shows a compositional bias: basic and acidic residues. One can recognise a BRCT domain in the interval E337–V427. Disordered stretches follow at residues K518–D557 and I574–R604. 2 stretches are compositionally biased toward basic and acidic residues: residues V531 to D557 and N577 to N586.

The protein belongs to the pescadillo family.

Its subcellular location is the nucleus. It localises to the nucleolus. The protein localises to the nucleoplasm. Required for maturation of ribosomal RNAs and formation of the large ribosomal subunit. The sequence is that of Pescadillo homolog (PES) from Oryza sativa subsp. japonica (Rice).